The chain runs to 277 residues: Indole-3-glycerol phosphate synthase (277 aa).

It belongs to the TrpC family.

The catalysed reaction is 1-(2-carboxyphenylamino)-1-deoxy-D-ribulose 5-phosphate + H(+) = (1S,2R)-1-C-(indol-3-yl)glycerol 3-phosphate + CO2 + H2O. The protein operates within amino-acid biosynthesis; L-tryptophan biosynthesis; L-tryptophan from chorismate: step 4/5. This Pseudomonas putida (Arthrobacter siderocapsulatus) protein is Indole-3-glycerol phosphate synthase (trpC).